Here is a 134-residue protein sequence, read N- to C-terminus: Phosphoribosyl-AMP cyclohydrolase (134 aa).

Mg(2+) is bound at residue Asp80. Residue Cys81 coordinates Zn(2+). Residues Asp82 and Asp84 each coordinate Mg(2+). Zn(2+) is bound by residues Cys98 and Cys105.

The protein belongs to the PRA-CH family. Homodimer. Requires Mg(2+) as cofactor. Zn(2+) is required as a cofactor.

The protein localises to the cytoplasm. It carries out the reaction 1-(5-phospho-beta-D-ribosyl)-5'-AMP + H2O = 1-(5-phospho-beta-D-ribosyl)-5-[(5-phospho-beta-D-ribosylamino)methylideneamino]imidazole-4-carboxamide. It functions in the pathway amino-acid biosynthesis; L-histidine biosynthesis; L-histidine from 5-phospho-alpha-D-ribose 1-diphosphate: step 3/9. Its function is as follows. Catalyzes the hydrolysis of the adenine ring of phosphoribosyl-AMP. The protein is Phosphoribosyl-AMP cyclohydrolase of Bordetella petrii (strain ATCC BAA-461 / DSM 12804 / CCUG 43448).